Reading from the N-terminus, the 74-residue chain is ATP synthase subunit c (74 aa).

Transmembrane regions (helical) follow at residues 8–28 (FIGI…VSNI) and 52–72 (IGAG…MLLI).

Belongs to the ATPase C chain family. In terms of assembly, F-type ATPases have 2 components, F(1) - the catalytic core - and F(0) - the membrane proton channel. F(1) has five subunits: alpha(3), beta(3), gamma(1), delta(1), epsilon(1). F(0) has three main subunits: a(1), b(2) and c(10-14). The alpha and beta chains form an alternating ring which encloses part of the gamma chain. F(1) is attached to F(0) by a central stalk formed by the gamma and epsilon chains, while a peripheral stalk is formed by the delta and b chains.

It localises to the cell inner membrane. Its function is as follows. F(1)F(0) ATP synthase produces ATP from ADP in the presence of a proton or sodium gradient. F-type ATPases consist of two structural domains, F(1) containing the extramembraneous catalytic core and F(0) containing the membrane proton channel, linked together by a central stalk and a peripheral stalk. During catalysis, ATP synthesis in the catalytic domain of F(1) is coupled via a rotary mechanism of the central stalk subunits to proton translocation. Key component of the F(0) channel; it plays a direct role in translocation across the membrane. A homomeric c-ring of between 10-14 subunits forms the central stalk rotor element with the F(1) delta and epsilon subunits. The protein is ATP synthase subunit c of Rickettsia prowazekii (strain Madrid E).